The sequence spans 218 residues: Adenylate kinase (218 aa).

10 to 15 (GAGKGT) serves as a coordination point for ATP. The segment at 30–59 (STGDMFRAAMADQTDLGVKAKAFIDKGELV) is NMP. Residues Thr31, Arg36, 57-59 (ELV), 85-88 (GFPR), and Gln92 each bind AMP. Residues 126-164 (GRFICKTCGATYHKLYHPTQVEGTCDRCGGHVFFQREDD) form an LID region. An ATP-binding site is contributed by Arg127. Positions 130 and 133 each coordinate Zn(2+). 136-137 (TY) provides a ligand contact to ATP. Zn(2+)-binding residues include Cys150 and Cys153. AMP contacts are provided by Arg161 and Arg172. Gln200 contacts ATP.

The protein belongs to the adenylate kinase family. As to quaternary structure, monomer.

Its subcellular location is the cytoplasm. It catalyses the reaction AMP + ATP = 2 ADP. The protein operates within purine metabolism; AMP biosynthesis via salvage pathway; AMP from ADP: step 1/1. Catalyzes the reversible transfer of the terminal phosphate group between ATP and AMP. Plays an important role in cellular energy homeostasis and in adenine nucleotide metabolism. The sequence is that of Adenylate kinase from Latilactobacillus sakei subsp. sakei (strain 23K) (Lactobacillus sakei subsp. sakei).